The sequence spans 398 residues: uncharacterized protein (398 aa).

An N-terminal signal peptide occupies residues 1 to 21 (MRKVGITLSVVALVIMGFVAG). Cys-22 carries the post-translational modification N-acetylcysteine. Cys-22 carries S-archaeol cysteine lipidation.

This sequence belongs to the BMP lipoprotein family.

It localises to the cell membrane. This is an uncharacterized protein from Pyrococcus furiosus (strain ATCC 43587 / DSM 3638 / JCM 8422 / Vc1).